The chain runs to 717 residues: MSYPGLTIINKTITLPDGREIQIETGKLAKQADGSAVVKLGNAMILATVVSAKEAKPGVDFMPLSVDYQEKFASNGKIPGGFLKRESRLSDYEILISRLVDRAMRPLFPEDFHADTQVAITLISADADVLPDALACLAAQAAMSVSDIPFNGPVSEVRVISLNGEFIINPKPAQIEKAELELIVAASYDNVIMVEGEMSEVSEELMLNAIKVAHDAIRTQCIVLKELESAAGKTEKRTYSHEVNDWDLKKKINDAVYQQVYEVAKLGNANKNTRAEGFKAVKKAYIESLPADHTEDLTLIGKYYHDVEKDAVRNLILDERKRLDGRSLEQIRPIWSEVGYLPSAHGSAIFTRGETQSLTTVTFGTRLDEQMIDSAMFSGNNKLMLHYNFPGFSTGEVKPNRGPGRREVGHGNLAYRAIKKVMPPEIENPYTIRIVSDILESNGSSSMATVCAGTLALMDAGIKIKAPVSGIAMGLITDTKTGRWAVLSDILGDEDHLGDMDFKVTGTEKGITACQMDIKVDGLSYDILSQALQQANRGRLHILSEMKKTLATPREDLKPHAPRMIMIQIPKELIGAVIGPGGKIIQEIQKTSGATVNIEEKDNAGWVSIFSKDKTALDSALSQIKGIVTLPEVGEVYEGKVKSITAFGAFVEFLPGKDGLLHISEIKWERLDTMEGVLEVGETVKVKLVEVDKKTGKYRLSRKVLIPKPEQQATSNS.

Asp495 and Asp501 together coordinate Mg(2+). One can recognise a KH domain in the interval 562-624 (PRMIMIQIPK…TALDSALSQI (63 aa)). Residues 634–703 (GEVYEGKVKS…KTGKYRLSRK (70 aa)) form the S1 motif domain.

This sequence belongs to the polyribonucleotide nucleotidyltransferase family. Mg(2+) serves as cofactor.

It localises to the cytoplasm. It catalyses the reaction RNA(n+1) + phosphate = RNA(n) + a ribonucleoside 5'-diphosphate. Functionally, involved in mRNA degradation. Catalyzes the phosphorolysis of single-stranded polyribonucleotides processively in the 3'- to 5'-direction. The chain is Polyribonucleotide nucleotidyltransferase from Cytophaga hutchinsonii (strain ATCC 33406 / DSM 1761 / CIP 103989 / NBRC 15051 / NCIMB 9469 / D465).